The following is a 298-amino-acid chain: uncharacterized protein (298 aa).

10 consecutive transmembrane segments (helical) span residues 9–28 (GYVL…LYFK), 38–60 (IIVQ…WKHP), 72–94 (RFVV…VWAV), 104–121 (LGYY…MLLL), 128–145 (LQWL…QQVW), 150–167 (LPWV…YGLI), 174–196 (AALP…WLLF), 211–233 (PEAL…FNAA), 240–262 (ATLG…LLFG), and 272–291 (AFAF…WRSL). In terms of domain architecture, EamA spans 18-141 (VIWGLFPLYF…AVALASLGVA (124 aa)).

It belongs to the EamA transporter family.

Its subcellular location is the cell membrane. This is an uncharacterized protein from Pseudomonas aeruginosa (strain ATCC 15692 / DSM 22644 / CIP 104116 / JCM 14847 / LMG 12228 / 1C / PRS 101 / PAO1).